We begin with the raw amino-acid sequence, 300 residues long: 4-diphosphocytidyl-2-C-methyl-D-erythritol kinase (300 aa).

The active site involves Lys12. 94–104 (PAQAGIGGGSS) is a binding site for ATP. The active site involves Asp136.

It belongs to the GHMP kinase family. IspE subfamily.

It catalyses the reaction 4-CDP-2-C-methyl-D-erythritol + ATP = 4-CDP-2-C-methyl-D-erythritol 2-phosphate + ADP + H(+). It participates in isoprenoid biosynthesis; isopentenyl diphosphate biosynthesis via DXP pathway; isopentenyl diphosphate from 1-deoxy-D-xylulose 5-phosphate: step 3/6. In terms of biological role, catalyzes the phosphorylation of the position 2 hydroxy group of 4-diphosphocytidyl-2C-methyl-D-erythritol. The protein is 4-diphosphocytidyl-2-C-methyl-D-erythritol kinase of Verminephrobacter eiseniae (strain EF01-2).